The sequence spans 224 residues: Mannose-specific lectin 3 (224 aa).

2 consecutive Bulb-type lectin domains span residues 2 to 111 and 117 to 222; these read NNVL…PAAA and RNVL…VWST. 2 disulfide bridges follow: C30-C52 and C145-C170.

In terms of assembly, heterotetramer of 2 domain 1 and 2 domain 2 chains arranged as a dimer of domain 1/domain 2 heterodimers.

Its function is as follows. Mannose-specific lectin. Has weak agglutinating activity towards trypsin-treated erythrocytes from rabbit but not from human. This chain is Mannose-specific lectin 3, found in Crocus vernus (Dutch crocus).